The following is a 439-amino-acid chain: Protein PHYTOCHROME KINASE SUBSTRATE 1 (439 aa).

The span at 1 to 14 (MVTLTPSSASTPKT) shows a compositional bias: polar residues. Disordered stretches follow at residues 1 to 22 (MVTL…MKNN), 54 to 80 (KTLN…APED), and 100 to 139 (QGSS…SSWN). The segment covering 63–79 (KQEEFGDEKKMVKKAPE) has biased composition (basic and acidic residues). 2 stretches are compositionally biased toward polar residues: residues 100–109 (QGSSVLSLTN) and 118–139 (DSKQ…SSWN). Phosphoserine occurs at positions 238 and 244. Disordered stretches follow at residues 259–311 (LPLP…PTCY) and 355–439 (TAKS…LYSQ). Basic and acidic residues predominate over residues 412–421 (TKPKSFETRR). The segment covering 424–439 (SNSSISHTQSSLLYSQ) has biased composition (low complexity).

Belongs to the PKS family. Interacts with PKS2, RPT3, PHOT1, PHOT2 and the C-termini of both phytochromes A (phyA) and B (phyB). Binds both spectral forms of phytochrome, Pr and Pfr. Post-translationally, phosphorylated on Ser and to a lower extent on Thr by phytochromes. Phosphorylation is stimulated twofold by red light. In terms of tissue distribution, expressed in young seedlings in both darkness and light. Moderate in leaves and very low in roots and flowers. Expressed in the elongation zone of the root and hypocotyl.

Its subcellular location is the cell membrane. Functionally, may be responsible for light-regulated cytoplasmic sequestration of phytochromes or may be a negative regulator of phytochrome B signaling. Component of the network that modulates the very low-fluence response (VLFR) branch of phyA signaling. Acts positively in PHOT1 signaling. Regulates phytochrome-mediated photomorphogenesis and hypocotyl phototropism. Involved in the control of leaf flattening and leaf positioning. Promotes negative root phototropism and negatively regulates root gravitropism. May act by controlling auxin homeostasis. The polypeptide is Protein PHYTOCHROME KINASE SUBSTRATE 1 (PKS1) (Arabidopsis thaliana (Mouse-ear cress)).